A 79-amino-acid polypeptide reads, in one-letter code: Acyl carrier protein (79 aa).

The 76-residue stretch at 2 to 77 (SSIEDRVKKI…QAVDYIKKHL (76 aa)) folds into the Carrier domain. The residue at position 37 (serine 37) is an O-(pantetheine 4'-phosphoryl)serine.

Belongs to the acyl carrier protein (ACP) family. Post-translationally, 4'-phosphopantetheine is transferred from CoA to a specific serine of apo-ACP by AcpS. This modification is essential for activity because fatty acids are bound in thioester linkage to the sulfhydryl of the prosthetic group.

It is found in the cytoplasm. It participates in lipid metabolism; fatty acid biosynthesis. Its function is as follows. Carrier of the growing fatty acid chain in fatty acid biosynthesis. The protein is Acyl carrier protein of Halorhodospira halophila (strain DSM 244 / SL1) (Ectothiorhodospira halophila (strain DSM 244 / SL1)).